We begin with the raw amino-acid sequence, 314 residues long: uncharacterized protein (314 aa).

An N-terminal signal peptide occupies residues 1–26 (MRGRVAGSCAPLGLLLVCLRLPGLFA). Residues 41–60 (GTNLPQLGQPSLTGPPNSEH) show a composition bias toward polar residues. Disordered regions lie at residues 41-65 (GTNL…QPAL), 77-96 (LKLS…SAVQ), 147-191 (GSGP…GKIL), and 292-314 (PPGS…LQWG). A compositionally biased stretch (low complexity) spans 147–157 (GSGPLPGESSP). Over residues 167-177 (SHLHQDSESRR) the composition is skewed to basic and acidic residues. The segment covering 303–314 (FPNPPSPGLQWG) has biased composition (pro residues).

In terms of assembly, binds to numerous extracellular matrix proteins. In terms of tissue distribution, taste cell specific.

The protein resides in the secreted. The protein localises to the extracellular space. It is found in the extracellular matrix. This is an uncharacterized protein from Macaca mulatta (Rhesus macaque).